Reading from the N-terminus, the 679-residue chain is Methionine--tRNA ligase (679 aa).

Positions 15-25 (PYANGPIHLGH) match the 'HIGH' region motif. Residues C146, C149, C159, and C162 each coordinate Zn(2+). The 'KMSKS' region motif lies at 332–336 (KMSKS). An ATP-binding site is contributed by K335. The region spanning 578–679 (DFAKIDLRIA…EGAQPGMKVK (102 aa)) is the tRNA-binding domain.

This sequence belongs to the class-I aminoacyl-tRNA synthetase family. MetG type 1 subfamily. Homodimer. Zn(2+) serves as cofactor.

It is found in the cytoplasm. It carries out the reaction tRNA(Met) + L-methionine + ATP = L-methionyl-tRNA(Met) + AMP + diphosphate. Functionally, is required not only for elongation of protein synthesis but also for the initiation of all mRNA translation through initiator tRNA(fMet) aminoacylation. This chain is Methionine--tRNA ligase, found in Shewanella pealeana (strain ATCC 700345 / ANG-SQ1).